A 394-amino-acid chain; its full sequence is Metallophosphoesterase 1 (394 aa).

A helical membrane pass occupies residues 27–47 (TVVVISVLLFCEYFIYYLVLF). 6 residues coordinate a divalent metal cation: Asp-74, Asp-116, Asn-154, His-247, His-301, and His-303. Residues 354 to 374 (TVLTTYCAAAAFLLVLILAHF) form a helical membrane-spanning segment.

The protein belongs to the metallophosphoesterase superfamily. MPPE1 family. Interacts with GPI-anchor proteins (via the GPI portion). Interacts with TMED10. Mn(2+) serves as cofactor.

The protein resides in the endoplasmic reticulum-Golgi intermediate compartment membrane. Functionally, metallophosphoesterase that catalyzes the removal of a side-chain ethanolamine-phosphate (EtNP) from the second mannose of the GPI-anchor protein intermediate. Participates in the glycan remodeling steps of GPI-anchor maturation to allow an efficient transport of GPI-anchor proteins from the endoplasmic reticulum to the Golgi. The polypeptide is Metallophosphoesterase 1 (Rattus norvegicus (Rat)).